The primary structure comprises 479 residues: MYDSTSKIKDLSLAPFGKLQMEISETEMPGLMTIREEYEKLKPLKGAKITGCLHMTIETALLMETLQKLGAKLRWCSCNIYSTLDYAAAAVSTLENVSVFAWRGETLEEYWWCVEKALTWGENGEGPDLIVDDGADASYLVHKGAEYEKLYEEKKILPDPETGKNEEERCFLSLIKSSILKNPKKWTNMSKKIIGMSEETTTGVLRVKKIEKNNGLLFTAINVNDSVTKQKYDNIYGCRHSLPDGLMRATDFMISGKIVVICGYGDVGKGCASAMKGLGARVYVTEVDPICAIQAVMEGFNVVTLEEIVEKGDFFVTCTGNVDIIKLEHLLKMKNNAVVGNIGHFDDEIQIADLFSHEGIEIENVKPQVDRVTLPNGNKIIVLAQGRLLNLACATGHPAFVMSFSFCNQVFAQLELWENRNTGKYEKNKSYILPKELDEKVAYYHLKKLNATLTELDDNQCEFLGVSKNGPFKSEAYRY.

Positions 56, 133, and 199 each coordinate substrate. 200 to 202 contributes to the NAD(+) binding site; the sequence is TTT. Residues K229 and D233 each contribute to the substrate site. Residues N234, 263–268, E286, N321, 342–344, and N390 contribute to the NAD(+) site; these read GYGDVG and IGH.

Belongs to the adenosylhomocysteinase family. In terms of assembly, homotetramer. NAD(+) serves as cofactor.

The catalysed reaction is S-adenosyl-L-homocysteine + H2O = L-homocysteine + adenosine. It participates in amino-acid biosynthesis; L-homocysteine biosynthesis; L-homocysteine from S-adenosyl-L-homocysteine: step 1/1. Adenosylhomocysteine is a competitive inhibitor of S-adenosyl-L-methionine-dependent methyl transferase reactions; therefore adenosylhomocysteinase may play a key role in the control of methylations via regulation of the intracellular concentration of adenosylhomocysteine. This Plasmodium chabaudi chabaudi protein is Adenosylhomocysteinase.